We begin with the raw amino-acid sequence, 412 residues long: Divalent metal cation transporter MntH (412 aa).

Helical transmembrane passes span 19–39 (LSLM…GNFA), 46–66 (AAYG…AMLI), 98–118 (WVQA…GAAI), 122–142 (LLLG…TFLI), 155–175 (MVIG…LVFS), 196–216 (AVLL…IYLH), 241–261 (IAMT…AAAF), 286–306 (AAAV…TVVG), 348–368 (VLVL…VPLL), and 392–412 (LIVV…MSGI).

Belongs to the NRAMP family.

The protein resides in the cell inner membrane. H(+)-stimulated, divalent metal cation uptake system. The polypeptide is Divalent metal cation transporter MntH (Pectobacterium carotovorum subsp. carotovorum (strain PC1)).